A 382-amino-acid chain; its full sequence is Mannitol-1-phosphate 5-dehydrogenase (382 aa).

3-14 (ALHFGAGNIGRG) lines the NAD(+) pocket.

It belongs to the mannitol dehydrogenase family.

It catalyses the reaction D-mannitol 1-phosphate + NAD(+) = beta-D-fructose 6-phosphate + NADH + H(+). This Salmonella typhi protein is Mannitol-1-phosphate 5-dehydrogenase.